Reading from the N-terminus, the 416-residue chain is Phosphoglycerate kinase (416 aa).

An N-acetylserine modification is found at serine 2. Positions 23, 24, 25, 26, 38, 39, 62, 63, 65, and 66 each coordinate (2R)-3-phosphoglycerate. Lysine 82 participates in a covalent cross-link: Glycyl lysine isopeptide (Lys-Gly) (interchain with G-Cter in ubiquitin). Threonine 93 bears the Phosphothreonine mark. A Phosphoserine modification is found at serine 110. Leucine 121 and arginine 122 together coordinate (2R)-3-phosphoglycerate. Phosphoserine is present on residues serine 130 and serine 154. Residues histidine 168 and arginine 169 each contribute to the (2R)-3-phosphoglycerate site. Serine 172 carries the post-translational modification Phosphoserine. Lysine 197 participates in a covalent cross-link: Glycyl lysine isopeptide (Lys-Gly) (interchain with G-Cter in ubiquitin). At threonine 203 the chain carries Phosphothreonine. Glycine 212 contributes to the ADP binding site. Glycine 212 serves as a coordination point for CDP. AMP contacts are provided by alanine 213 and lysine 214. ATP contacts are provided by alanine 213 and lysine 214. Alanine 213 is a binding site for Mg(2+). Residues alanine 216 and aspartate 217 each coordinate Mg(2+). Aspartate 217 lines the CDP pocket. An AMP-binding site is contributed by lysine 218. Lysine 218 provides a ligand contact to ATP. Glycine 236 is a binding site for ADP. Glycine 236 lines the CDP pocket. AMP is bound at residue glycine 237. Glycine 237 is a binding site for ATP. Threonine 241 is subject to Phosphothreonine. Residues lysine 258 and lysine 274 each participate in a glycyl lysine isopeptide (Lys-Gly) (interchain with G-Cter in ubiquitin) cross-link. The residue at position 298 (threonine 298) is a Phosphothreonine. Lysine 302 is covalently cross-linked (Glycyl lysine isopeptide (Lys-Gly) (interchain with G-Cter in ubiquitin)). AMP is bound at residue glycine 311. Residues glycine 311 and leucine 312 each contribute to the ATP site. Serine 318 bears the Phosphoserine mark. At threonine 331 the chain carries Phosphothreonine. Asparagine 335 contacts ATP. Glycine 336 and phenylalanine 341 together coordinate CDP. Phenylalanine 341 contributes to the ADP binding site. Glutamate 342 is an AMP binding site. Glutamate 342 serves as a coordination point for ATP. Glycine 371 lines the (2R)-3-phosphoglycerate pocket. The ATP site is built by aspartate 373 and threonine 374. Aspartate 373 serves as a coordination point for Mg(2+). Threonine 392 is subject to Phosphothreonine. (2R)-3-phosphoglycerate-binding residues include glycine 394 and glycine 395.

This sequence belongs to the phosphoglycerate kinase family. Monomer. Mg(2+) is required as a cofactor.

Its subcellular location is the cytoplasm. It localises to the mitochondrion. The enzyme catalyses (2R)-3-phosphoglycerate + ATP = (2R)-3-phospho-glyceroyl phosphate + ADP. It functions in the pathway carbohydrate degradation; glycolysis; pyruvate from D-glyceraldehyde 3-phosphate: step 2/5. In terms of biological role, catalyzes one of the two ATP producing reactions in the glycolytic pathway via the reversible conversion of 1,3-diphosphoglycerate to 3-phosphoglycerate. Both L- and D- forms of purine and pyrimidine nucleotides can be used as substrates, but the activity is much lower on pyrimidines. Negatively regulates the biosynthesis of acetyl-CoA from pyruvate in the mitochondrion. In Saccharomyces cerevisiae (strain ATCC 204508 / S288c) (Baker's yeast), this protein is Phosphoglycerate kinase (PGK1).